We begin with the raw amino-acid sequence, 497 residues long: 4,4'-diaponeurosporene oxygenase (497 aa).

An FAD-binding site is contributed by 7 to 19 (VIGGGLGGISAAI).

Belongs to the carotenoid/retinoid oxidoreductase family. CrtP subfamily. FAD is required as a cofactor.

The catalysed reaction is all-trans-4,4'-diaponeurosporene + 2 AH2 + 2 O2 = 4,4'-diaponeurosporenal + 2 A + 3 H2O. Its pathway is carotenoid biosynthesis; staphyloxanthin biosynthesis; staphyloxanthin from farnesyl diphosphate: step 3/5. Functionally, involved in the biosynthesis of the yellow-orange carotenoid staphyloxanthin, which plays a role in the virulence via its protective function against oxidative stress. Catalyzes the oxidation of the terminal methyl side group of 4,4'-diaponeurosporene to form 4,4'-diaponeurosporen-4-al. The polypeptide is 4,4'-diaponeurosporene oxygenase (Staphylococcus aureus (strain MW2)).